The sequence spans 107 residues: Small ribosomal subunit protein uS17 (107 aa).

The protein belongs to the universal ribosomal protein uS17 family. In terms of assembly, part of the 30S ribosomal subunit.

In terms of biological role, one of the primary rRNA binding proteins, it binds specifically to the 5'-end of 16S ribosomal RNA. The protein is Small ribosomal subunit protein uS17 of Aquifex aeolicus (strain VF5).